Here is a 268-residue protein sequence, read N- to C-terminus: Interleukin-2 receptor subunit alpha (268 aa).

Positions M1–T21 are cleaved as a signal peptide. In terms of domain architecture, Sushi 1 spans D22–S81. Over D22 to Q237 the chain is Extracellular. 3 cysteine pairs are disulfide-bonded: C24/C64, C49/C77, and C51/C79. N-linked (GlcNAc...) asparagine glycosylation occurs at N67. The tract at residues S83–P112 is disordered. The span at E85–N102 shows a compositional bias: basic and acidic residues. The Sushi 2 domain occupies G120–S183. Cystine bridges form between C122/C165 and C149/C181. The tract at residues Q186–S213 is disordered. Positions D204 to S213 are enriched in polar residues. Residues I238–W258 traverse the membrane as a helical segment. Over Q259–I268 the chain is Cytoplasmic.

In terms of assembly, non-covalent dimer of an alpha and a beta subunit. IL2R exists in 3 different forms: a high affinity dimer, an intermediate affinity monomer (beta subunit), and a low affinity monomer (alpha subunit). The high and intermediate affinity forms also associate with a gamma subunit.

The protein resides in the membrane. Functionally, receptor for interleukin-2. The receptor is involved in the regulation of immune tolerance by controlling regulatory T cells (TREGs) activity. TREGs suppress the activation and expansion of autoreactive T-cells. This chain is Interleukin-2 receptor subunit alpha (IL2RA), found in Canis lupus familiaris (Dog).